The primary structure comprises 266 residues: Signal peptidase I (266 aa).

The Cytoplasmic segment spans residues 1–20 (MQTDNTKSNTNKTAKQEWGS). The chain crosses the membrane as a helical span at residues 21–41 (FVFVICIALLIRILIMEPFTV). Residues 42–266 (PTGSMKATIL…IFRNLYNTDV (225 aa)) are Periplasmic-facing. Active-site residues include serine 45 and lysine 108.

The protein belongs to the peptidase S26 family.

It localises to the cell inner membrane. It catalyses the reaction Cleavage of hydrophobic, N-terminal signal or leader sequences from secreted and periplasmic proteins.. The sequence is that of Signal peptidase I (lepB) from Rickettsia massiliae (strain Mtu5).